The sequence spans 362 residues: Serine/threonine-protein kinase-like protein At3g51990 (362 aa).

A signal peptide spans 1–24 (MGYLSCKAGSAVAIAVSSAASTSG). The segment covering 21 to 32 (STSGSTSSKASA) has biased composition (low complexity). The tract at residues 21–43 (STSGSTSSKASAPPESPIEDRPR) is disordered. The region spanning 59-329 (FDINNLLGRG…PGMEEVVGWL (271 aa)) is the Protein kinase domain. Residues 65–73 (LGRGSHGSV) and Lys-86 contribute to the ATP site. N-linked (GlcNAc...) asparagine glycosylation is present at Asn-136. Asp-185 (proton acceptor) is an active-site residue. Phosphoserine is present on Ser-219. Phosphothreonine occurs at positions 220 and 225. The residue at position 233 (Tyr-233) is a Phosphotyrosine.

It belongs to the protein kinase superfamily. Ser/Thr protein kinase family.

It localises to the secreted. It carries out the reaction L-seryl-[protein] + ATP = O-phospho-L-seryl-[protein] + ADP + H(+). The catalysed reaction is L-threonyl-[protein] + ATP = O-phospho-L-threonyl-[protein] + ADP + H(+). The sequence is that of Serine/threonine-protein kinase-like protein At3g51990 from Arabidopsis thaliana (Mouse-ear cress).